Reading from the N-terminus, the 422-residue chain is DNA-directed RNA polymerase III subunit RPC4 (422 aa).

Disordered regions lie at residues 1 to 80 (MSSN…GQQR), 115 to 190 (KSEG…DDEE), 219 to 244 (IQEA…GTGL), and 318 to 350 (RPAV…TKDA). The Nuclear localization signal signature appears at 25–29 (KPSLK). Positions 28–37 (LKFKPKAVAR) are enriched in basic residues. The span at 38–64 (KSKEEREAAASKVKLEEESKRGNDKKH) shows a compositional bias: basic and acidic residues. S137 and S138 each carry phosphoserine. Residues 138–148 (SENEAEDDDNE) show a composition bias toward acidic residues. Basic and acidic residues predominate over residues 160–170 (MGKEFEARNLI). Residues S178, S182, and S224 each carry the phosphoserine modification. Residues 219–229 (IQEALSEKPTR) show a composition bias toward basic and acidic residues. 2 positions are modified to phosphothreonine: T228 and T232.

This sequence belongs to the eukaryotic RPC4/POLR3D RNA polymerase subunit family. As to quaternary structure, component of the RNA polymerase III (Pol III) complex consisting of 17 subunits. Interacts with RPC37/RPC5. RPC53/RPC4, RPC37/RPC5 and RPC11/RPC10 probably form a Pol III subcomplex.

The protein localises to the nucleus. DNA-dependent RNA polymerase catalyzes the transcription of DNA into RNA using the four ribonucleoside triphosphates as substrates. Specific peripheric component of RNA polymerase III which synthesizes small RNAs, such as 5S rRNA and tRNAs. Essential for tRNA synthesis. The RPC53/RPC4-RPC37/RPC5 subcomplex is required for terminator recognition and reinitiation. The polypeptide is DNA-directed RNA polymerase III subunit RPC4 (RPC53) (Saccharomyces cerevisiae (strain ATCC 204508 / S288c) (Baker's yeast)).